A 219-amino-acid polypeptide reads, in one-letter code: Germin-like protein subfamily 2 member 2 (219 aa).

The first 22 residues, 1–22 (MMNSRISIIIALSCIMITSIRA), serve as a signal peptide directing secretion. Cys32 and Cys47 are oxidised to a cystine. Asn52 and Asn70 each carry an N-linked (GlcNAc...) asparagine glycan. One can recognise a Cupin type-1 domain in the interval 59–209 (FFAGISKPAV…TFQVGSKMVD (151 aa)). His109, His111, Glu116, and His155 together coordinate Mn(2+).

The protein belongs to the germin family. As to quaternary structure, oligomer (believed to be a pentamer but probably hexamer).

Its subcellular location is the secreted. It is found in the extracellular space. The protein localises to the apoplast. Its function is as follows. May play a role in plant defense. Probably has no oxalate oxidase activity even if the active site is conserved. This Arabidopsis thaliana (Mouse-ear cress) protein is Germin-like protein subfamily 2 member 2.